A 359-amino-acid chain; its full sequence is MMTQPNLNIVPFVSVDHMMKLVLRVGVETFLKELAGYVEEDFRRWQNFDKTPRVASHSKEGVIELMPTSDGTLYGFKYVNGHPKNTRDGLQTVTAFGVLADVGSGYPMLLTEMTILTALRTAATSAVAAKHLAPKNARTMAIIGNGAQSEFQALAFKAILGVDKLRLYDLDPQATAKCIRNLQGAGFNIVACKSVEEAVEGADIITTVTADKANATILTDNMVGAGVHINAVGGDCSGKTELHGDILRRSDIFVEYPPQTRIEGEIQQLPEDYPVNELWEVITGRIAGRKDARQITLFDSVGFATEDFSALRYVRDKLKDTGLYEQLDLLADPDEPRDLYGMLLRHEKLLQSESTKPAA.

L-ornithine is bound by residues Arg-53 and Lys-77. Residues Thr-92, Arg-120, 147–148, Asp-169, Thr-209, 232–235, Lys-239, and Ser-300 each bind NAD(+); these read AQ and VGGD. Arg-120 serves as a coordination point for L-ornithine. Asp-235 provides a ligand contact to L-ornithine. Asp-235 functions as the Proton donor/acceptor in the catalytic mechanism. Val-301 lines the L-ornithine pocket.

The protein belongs to the ornithine cyclodeaminase/mu-crystallin family. Requires NAD(+) as cofactor.

It catalyses the reaction L-ornithine = L-proline + NH4(+). Its pathway is amino-acid biosynthesis; L-proline biosynthesis; L-proline from L-ornithine: step 1/1. Catalyzes the conversion of L-ornithine into L-proline with release of ammonia. This Brucella abortus biovar 1 (strain 9-941) protein is Ornithine cyclodeaminase.